Reading from the N-terminus, the 123-residue chain is DLLDDYVNTQGASLLTLSRKKLAGRSVEDCAAKCEEEAQDCYHGNGQSYRGTSSTTVTGRKCQSWSSMIPHRHQKTPESYPNAGLTMNYCRNPDADKSPWCYTTDPRVRWEFCNLKKCSEDSE.

Positions 40–118 (DCYHGNGQSY…RWEFCNLKKC (79 aa)) constitute a Kringle domain. Intrachain disulfides connect Cys-41–Cys-118, Cys-62–Cys-101, and Cys-90–Cys-113.

This sequence belongs to the peptidase S1 family. Plasminogen subfamily. In terms of assembly, interacts with CSPG4 and AMOT. Interacts (via the Kringle domains) with HRG; the interaction tethers PLG to the cell surface and enhances its activation. Interacts (via Kringle 4 domain) with ADA; the interaction stimulates PLG activation when in complex with DPP4. Angiostatin: Interacts with ATP5F1A; the interaction inhibits most of the angiogenic effects of angiostatin.

It is found in the secreted. It carries out the reaction Preferential cleavage: Lys-|-Xaa &gt; Arg-|-Xaa, higher selectivity than trypsin. Converts fibrin into soluble products.. Converted into plasmin by plasminogen activators, both plasminogen and its activator being bound to fibrin. Cannot be activated with streptokinase. In terms of biological role, plasmin dissolves the fibrin of blood clots and acts as a proteolytic factor in a variety of other processes including embryonic development, tissue remodeling, tumor invasion, and inflammation. In ovulation, weakens the walls of the Graafian follicle. It activates the urokinase-type plasminogen activator, collagenases and several complement zymogens, such as C1, C4 and C5. Cleavage of fibronectin and laminin leads to cell detachment and apoptosis. Also cleaves fibrin, thrombospondin and von Willebrand factor. Its role in tissue remodeling and tumor invasion may be modulated by CSPG4. Binds to cells. The polypeptide is Plasminogen (PLG) (Capra hircus (Goat)).